The primary structure comprises 52 residues: MKKYVCTVCGYEYDPAEGDPDNGVKPGTSFDDLPADWVCPVCGAPKSEFEAA.

One can recognise a Rubredoxin-like domain in the interval 1-52; the sequence is MKKYVCTVCGYEYDPAEGDPDNGVKPGTSFDDLPADWVCPVCGAPKSEFEAA. 4 residues coordinate Fe cation: C6, C9, C39, and C42.

The protein belongs to the rubredoxin family. Fe(3+) is required as a cofactor.

The protein localises to the cytoplasm. Rubredoxin is a small nonheme, iron protein lacking acid-labile sulfide. Its single Fe, chelated to 4 Cys, functions as an electron acceptor and may also stabilize the conformation of the molecule. Its function is as follows. Electron acceptor for cytoplasmic lactate dehydrogenase. In Nitratidesulfovibrio vulgaris (strain ATCC 29579 / DSM 644 / CCUG 34227 / NCIMB 8303 / VKM B-1760 / Hildenborough) (Desulfovibrio vulgaris), this protein is Rubredoxin (rub).